The primary structure comprises 309 residues: Olfactory receptor 8U1 (309 aa).

Topologically, residues 1-25 (MAHINCTQATEFILVGLTDHQELKM) are extracellular. An N-linked (GlcNAc...) asparagine glycan is attached at Asn5. A helical transmembrane segment spans residues 26 to 46 (PLFVLFLSIYLFTVVGNLGLI). Over 47–54 (LLIRADTS) the chain is Cytoplasmic. Residues 55 to 75 (LNTPMYFFLSNLAFVDFCYSS) form a helical membrane-spanning segment. At 76–99 (VITPKMLGNFLYKQNVISFDACAT) the chain is on the extracellular side. Cysteines 97 and 189 form a disulfide. The chain crosses the membrane as a helical span at residues 100-120 (QLGCFLTFMISESLLLASMAY). Residues 121-139 (DRYVAICNPLLYMVVMTPG) lie on the Cytoplasmic side of the membrane. Residues 140–160 (ICIQLVAVPYSYSFLMALFHT) form a helical membrane-spanning segment. The Extracellular segment spans residues 161 to 197 (ILTFRLSYCHSNIVNHFYCDDMPLLRLTCSDTRFKQL). A helical transmembrane segment spans residues 198 to 217 (WIFACAGIMFISSLLIVFVS). The Cytoplasmic portion of the chain corresponds to 218 to 237 (YMFIISAILRMHSAEGRQKA). Residues 238–258 (FSTCGSHMLAVTIFYGTLIFM) traverse the membrane as a helical segment. Topologically, residues 259–271 (YLQPSSSHALDTD) are extracellular. A helical membrane pass occupies residues 272 to 292 (KMASVFYTVIIPMLNPLIYSL). At 293–309 (QNKEVKEALKKIIINKN) the chain is on the cytoplasmic side.

The protein belongs to the G-protein coupled receptor 1 family.

It localises to the cell membrane. In terms of biological role, odorant receptor. This is Olfactory receptor 8U1 (OR8U1) from Homo sapiens (Human).